A 252-amino-acid polypeptide reads, in one-letter code: Chitooligosaccharide deacetylase (252 aa).

Residues His61 and His125 each contribute to the Mg(2+) site.

It belongs to the YdjC deacetylase family. ChbG subfamily. As to quaternary structure, homodimer. It depends on Mg(2+) as a cofactor.

The protein localises to the cytoplasm. It catalyses the reaction N,N'-diacetylchitobiose + H2O = N-acetyl-beta-D-glucosaminyl-(1-&gt;4)-D-glucosamine + acetate. The enzyme catalyses diacetylchitobiose-6'-phosphate + H2O = N'-monoacetylchitobiose-6'-phosphate + acetate. Its pathway is glycan degradation; chitin degradation. Functionally, involved in the degradation of chitin. ChbG is essential for growth on the acetylated chitooligosaccharides chitobiose and chitotriose but is dispensable for growth on cellobiose and chitosan dimer, the deacetylated form of chitobiose. Deacetylation of chitobiose-6-P and chitotriose-6-P is necessary for both the activation of the chb promoter by the regulatory protein ChbR and the hydrolysis of phosphorylated beta-glucosides by the phospho-beta-glucosidase ChbF. Catalyzes the removal of only one acetyl group from chitobiose-6-P to yield monoacetylchitobiose-6-P, the inducer of ChbR and the substrate of ChbF. The polypeptide is Chitooligosaccharide deacetylase (Enterobacter sp. (strain 638)).